Here is a 563-residue protein sequence, read N- to C-terminus: Membrane protein insertase YidC (563 aa).

The chain crosses the membrane as a helical span at residues 1–21 (MDIKRTILIVALAIVTYVGVL). Positions 43-62 (APGIPDTAAGTNGSASADVP) are disordered. Transmembrane regions (helical) follow at residues 344-364 (LELTVDYGFLWFIAQPIFWLL), 370-390 (ILGNWGWSIIVLTMLIKGLFF), 440-460 (LGGCLPILVQMPVFLSLYWVL), 471-491 (WILWITDLSIKDPFFILPIIM), and 518-538 (PIIFTFFFLWFPAGLVLYWVV).

The protein belongs to the OXA1/ALB3/YidC family. Type 1 subfamily. In terms of assembly, interacts with the Sec translocase complex via SecD. Specifically interacts with transmembrane segments of nascent integral membrane proteins during membrane integration.

The protein localises to the cell inner membrane. Its function is as follows. Required for the insertion and/or proper folding and/or complex formation of integral membrane proteins into the membrane. Involved in integration of membrane proteins that insert both dependently and independently of the Sec translocase complex, as well as at least some lipoproteins. Aids folding of multispanning membrane proteins. This is Membrane protein insertase YidC from Pseudomonas savastanoi pv. phaseolicola (strain 1448A / Race 6) (Pseudomonas syringae pv. phaseolicola (strain 1448A / Race 6)).